A 337-amino-acid chain; its full sequence is LIX1-like protein (337 aa).

The disordered stretch occupies residues 1-55; the sequence is METMRAQRLQPGVGVGGRGTLRALRPGVTGAPTSAATPPVGPPPAPPPPAPPLPP. Over residues 26 to 38 the composition is skewed to low complexity; the sequence is PGVTGAPTSAATP. Over residues 39-55 the composition is skewed to pro residues; it reads PVGPPPAPPPPAPPLPP.

Belongs to the LIX1 family.

The polypeptide is LIX1-like protein (Lix1l) (Mus musculus (Mouse)).